The sequence spans 76 residues: Serine proteinase inhibitor IA-1 (76 aa).

At Ser-1 the chain carries N-acetylserine.

This sequence belongs to the protease inhibitor I9 family.

Functionally, specifically inhibits an endogenous intracellular serine proteinase (proteinase A). This chain is Serine proteinase inhibitor IA-1, found in Pleurotus ostreatus (Oyster mushroom).